The following is a 67-amino-acid chain: DNA gyrase inhibitor YacG (67 aa).

Zn(2+)-binding residues include Cys9, Cys12, Cys28, and Cys32. The tract at residues 48–67 (PVSPDAEDELFSEELPPRAH) is disordered.

Belongs to the DNA gyrase inhibitor YacG family. In terms of assembly, interacts with GyrB. Zn(2+) is required as a cofactor.

In terms of biological role, inhibits all the catalytic activities of DNA gyrase by preventing its interaction with DNA. Acts by binding directly to the C-terminal domain of GyrB, which probably disrupts DNA binding by the gyrase. This is DNA gyrase inhibitor YacG from Pseudomonas fluorescens (strain ATCC BAA-477 / NRRL B-23932 / Pf-5).